Consider the following 618-residue polypeptide: Chaperone protein HscA homolog (618 aa).

The protein belongs to the heat shock protein 70 family.

Its function is as follows. Chaperone involved in the maturation of iron-sulfur cluster-containing proteins. Has a low intrinsic ATPase activity which is markedly stimulated by HscB. This Variovorax paradoxus (strain S110) protein is Chaperone protein HscA homolog.